Consider the following 370-residue polypeptide: Calcium/calmodulin-dependent protein kinase type 1 (370 aa).

Residues 20–276 (YDFRDVLGTG…CEQALQHPWI (257 aa)) enclose the Protein kinase domain. ATP is bound by residues 26-34 (LGTGAFSEV) and lysine 49. Residue lysine 59 forms a Glycyl lysine isopeptide (Lys-Gly) (interchain with G-Cter in ubiquitin) linkage. Aspartate 141 functions as the Proton acceptor in the catalytic mechanism. Threonine 177 is modified (phosphothreonine; by CaMKK1 and CaMKK2). The interval 276–316 (IAGDTALDKNIHQSVSEQIKKNFAKSKWKQAFNATAVVRHM) is autoinhibitory domain. A calmodulin-binding region spans residues 296–317 (KNFAKSKWKQAFNATAVVRHMR). The short motif at 315-321 (HMRKLQL) is the Nuclear export signal element. Phosphoserine is present on serine 363.

Belongs to the protein kinase superfamily. CAMK Ser/Thr protein kinase family. CaMK subfamily. As to quaternary structure, monomer. Interacts with XPO1. Interacts with MARK2, ARHGEF7/BETAPIX and GIT1. In terms of processing, phosphorylated by CaMKK1 and CaMKK2 on Thr-177. Polybiquitinated by the E3 ubiquitin-protein ligase complex SCF(FBXL12), leading to proteasomal degradation. In terms of tissue distribution, widely expressed. Expressed in cells of the zona glomerulosa of the adrenal cortex.

Its subcellular location is the cytoplasm. The protein resides in the nucleus. It carries out the reaction L-seryl-[protein] + ATP = O-phospho-L-seryl-[protein] + ADP + H(+). The enzyme catalyses L-threonyl-[protein] + ATP = O-phospho-L-threonyl-[protein] + ADP + H(+). Activated by Ca(2+)/calmodulin. Binding of calmodulin results in conformational change that relieves intrasteric autoinhibition and allows phosphorylation of Thr-177 within the activation loop by CaMKK1 or CaMKK2. Phosphorylation of Thr-177 results in several fold increase in total activity. Unlike CaMK4, is unable to exhibit autonomous activity after Ca(2+)/calmodulin activation. Its function is as follows. Calcium/calmodulin-dependent protein kinase that operates in the calcium-triggered CaMKK-CaMK1 signaling cascade and, upon calcium influx, regulates transcription activators activity, cell cycle, hormone production, cell differentiation, actin filament organization and neurite outgrowth. Recognizes the substrate consensus sequence [MVLIF]-x-R-x(2)-[ST]-x(3)-[MVLIF]. Regulates axonal extension and growth cone motility in hippocampal and cerebellar nerve cells. Upon NMDA receptor-mediated Ca(2+) elevation, promotes dendritic growth in hippocampal neurons and is essential in synapses for full long-term potentiation (LTP) and ERK2-dependent translational activation. Downstream of NMDA receptors, promotes the formation of spines and synapses in hippocampal neurons by phosphorylating ARHGEF7/BETAPIX on 'Ser-694', which results in the enhancement of ARHGEF7 activity and activation of RAC1. Promotes neuronal differentiation and neurite outgrowth by activation and phosphorylation of MARK2 on 'Ser-91', 'Ser-92', 'Ser-93' and 'Ser-294'. Promotes nuclear export of HDAC5 and binding to 14-3-3 by phosphorylation of 'Ser-259' and 'Ser-498' in the regulation of muscle cell differentiation. Regulates NUMB-mediated endocytosis by phosphorylation of NUMB on 'Ser-276' and 'Ser-295'. Involved in the regulation of basal and estrogen-stimulated migration of medulloblastoma cells through ARHGEF7/BETAPIX phosphorylation. Is required for proper activation of cyclin-D1/CDK4 complex during G1 progression in diploid fibroblasts. Plays a role in K(+) and ANG2-mediated regulation of the aldosterone synthase (CYP11B2) to produce aldosterone in the adrenal cortex. Phosphorylates EIF4G3/eIF4GII. In vitro phosphorylates CREB1, ATF1, CFTR, MYL9 and SYN1/synapsin I. This chain is Calcium/calmodulin-dependent protein kinase type 1 (CAMK1), found in Homo sapiens (Human).